Reading from the N-terminus, the 430-residue chain is RNA pseudouridine synthase 2, chloroplastic (430 aa).

The N-terminal 43 residues, 1–43 (MLSISQLPSFSLTTAKSLRYPSSPSSSLSIFFSFFPKVSNFVR), are a transit peptide targeting the chloroplast. The region spanning 82 to 155 (IRLDSWISSR…IPLDIVYEDK (74 aa)) is the S4 RNA-binding domain. The segment at 195 to 222 (SNSEEDDDSDEETFSDDEEMTTSPSSYA) is disordered. The segment covering 196-214 (NSEEDDDSDEETFSDDEEM) has biased composition (acidic residues). The active site involves Asp234.

The protein belongs to the pseudouridine synthase RluA family.

It localises to the plastid. Its subcellular location is the chloroplast. The catalysed reaction is a uridine in RNA = a pseudouridine in RNA. This Arabidopsis thaliana (Mouse-ear cress) protein is RNA pseudouridine synthase 2, chloroplastic.